A 441-amino-acid polypeptide reads, in one-letter code: Ribosomal protein uS12 methylthiotransferase RimO (441 aa).

Positions 7-117 (PKISFVSLGC…VLDAVHRAKP (111 aa)) constitute an MTTase N-terminal domain. [4Fe-4S] cluster-binding residues include C16, C52, C81, C148, C152, and C155. The Radical SAM core domain maps to 134 to 371 (LTPRHYAYLK…MARQQAISAR (238 aa)). The 67-residue stretch at 374-440 (KRKVGTRQQI…AYDLHGTVAG (67 aa)) folds into the TRAM domain.

This sequence belongs to the methylthiotransferase family. RimO subfamily. It depends on [4Fe-4S] cluster as a cofactor.

Its subcellular location is the cytoplasm. The enzyme catalyses L-aspartate(89)-[ribosomal protein uS12]-hydrogen + (sulfur carrier)-SH + AH2 + 2 S-adenosyl-L-methionine = 3-methylsulfanyl-L-aspartate(89)-[ribosomal protein uS12]-hydrogen + (sulfur carrier)-H + 5'-deoxyadenosine + L-methionine + A + S-adenosyl-L-homocysteine + 2 H(+). In terms of biological role, catalyzes the methylthiolation of an aspartic acid residue of ribosomal protein uS12. This chain is Ribosomal protein uS12 methylthiotransferase RimO, found in Rhodopseudomonas palustris (strain HaA2).